A 403-amino-acid polypeptide reads, in one-letter code: D-mannonate dehydratase Caul1427 (403 aa).

Substrate-binding residues include N38 and H123. The active-site Proton donor/acceptor is Y160. D211 is a binding site for Mg(2+). H213 serves as the catalytic Proton donor/acceptor. Residues E237 and E263 each contribute to the Mg(2+) site. Substrate contacts are provided by E263, R284, H313, D317, and E340.

Belongs to the mandelate racemase/muconate lactonizing enzyme family. GalD subfamily. Requires Mg(2+) as cofactor.

It carries out the reaction D-mannonate = 2-dehydro-3-deoxy-D-gluconate + H2O. Its pathway is carbohydrate metabolism; pentose and glucuronate interconversion. In terms of biological role, catalyzes the dehydration of D-mannonate. Has no detectable activity with a panel of 70 other acid sugars (in vitro). The chain is D-mannonate dehydratase Caul1427 from Caulobacter sp. (strain K31).